The chain runs to 441 residues: Serine--tRNA ligase (441 aa).

Position 250–252 (250–252 (TSE)) interacts with L-serine. ATP is bound by residues 281–283 (RRE) and Val297. Glu304 contacts L-serine. 368–371 (EIVS) contributes to the ATP binding site. Thr402 is an L-serine binding site.

This sequence belongs to the class-II aminoacyl-tRNA synthetase family. Type-1 seryl-tRNA synthetase subfamily. Homodimer. The tRNA molecule binds across the dimer.

Its subcellular location is the cytoplasm. It carries out the reaction tRNA(Ser) + L-serine + ATP = L-seryl-tRNA(Ser) + AMP + diphosphate + H(+). It catalyses the reaction tRNA(Sec) + L-serine + ATP = L-seryl-tRNA(Sec) + AMP + diphosphate + H(+). It functions in the pathway aminoacyl-tRNA biosynthesis; selenocysteinyl-tRNA(Sec) biosynthesis; L-seryl-tRNA(Sec) from L-serine and tRNA(Sec): step 1/1. Its function is as follows. Catalyzes the attachment of serine to tRNA(Ser). Is also able to aminoacylate tRNA(Sec) with serine, to form the misacylated tRNA L-seryl-tRNA(Sec), which will be further converted into selenocysteinyl-tRNA(Sec). This is Serine--tRNA ligase from Thermoplasma volcanium (strain ATCC 51530 / DSM 4299 / JCM 9571 / NBRC 15438 / GSS1).